Here is a 226-residue protein sequence, read N- to C-terminus: Pyridoxal 5'-phosphate synthase subunit Pdx2 (226 aa).

Glycine 52–serine 54 lines the L-glutamine pocket. Cysteine 87 functions as the Nucleophile in the catalytic mechanism. Residues arginine 124 and isoleucine 156 to arginine 157 contribute to the L-glutamine site. Active-site charge relay system residues include histidine 199 and glutamate 201.

It belongs to the glutaminase PdxT/SNO family. In the presence of PdxS, forms a dodecamer of heterodimers. Only shows activity in the heterodimer.

The enzyme catalyses aldehydo-D-ribose 5-phosphate + D-glyceraldehyde 3-phosphate + L-glutamine = pyridoxal 5'-phosphate + L-glutamate + phosphate + 3 H2O + H(+). It catalyses the reaction L-glutamine + H2O = L-glutamate + NH4(+). It functions in the pathway cofactor biosynthesis; pyridoxal 5'-phosphate biosynthesis. Functionally, catalyzes the hydrolysis of glutamine to glutamate and ammonia as part of the biosynthesis of pyridoxal 5'-phosphate. The resulting ammonia molecule is channeled to the active site of PdxS. The protein is Pyridoxal 5'-phosphate synthase subunit Pdx2 of Plasmodium berghei.